A 423-amino-acid polypeptide reads, in one-letter code: Elongation factor 1-alpha (423 aa).

The tr-type G domain maps to 5–221; the sequence is KEHINVAFIG…DLLKPPEKLV (217 aa). The interval 14-21 is G1; sequence GHVDHGKS. Position 14 to 21 (14 to 21) interacts with GTP; the sequence is GHVDHGKS. S21 contributes to the Mg(2+) binding site. Residues 70-74 are G2; it reads GVTID. The G3 stretch occupies residues 91–94; sequence DCPG. GTP is bound by residues 91-95 and 146-149; these read DCPGH and NKMD. Residues 146 to 149 form a G4 region; sequence NKMD. A G5 region spans residues 185-187; that stretch reads SAY.

Belongs to the TRAFAC class translation factor GTPase superfamily. Classic translation factor GTPase family. EF-Tu/EF-1A subfamily.

The protein resides in the cytoplasm. It catalyses the reaction GTP + H2O = GDP + phosphate + H(+). Functionally, GTP hydrolase that promotes the GTP-dependent binding of aminoacyl-tRNA to the A-site of ribosomes during protein biosynthesis. This chain is Elongation factor 1-alpha, found in Archaeoglobus fulgidus (strain ATCC 49558 / DSM 4304 / JCM 9628 / NBRC 100126 / VC-16).